Consider the following 393-residue polypeptide: NAD(P)H-quinone oxidoreductase subunit H, chloroplastic (393 aa).

The protein belongs to the complex I 49 kDa subunit family. As to quaternary structure, NDH is composed of at least 16 different subunits, 5 of which are encoded in the nucleus.

It localises to the plastid. Its subcellular location is the chloroplast thylakoid membrane. The enzyme catalyses a plastoquinone + NADH + (n+1) H(+)(in) = a plastoquinol + NAD(+) + n H(+)(out). It carries out the reaction a plastoquinone + NADPH + (n+1) H(+)(in) = a plastoquinol + NADP(+) + n H(+)(out). In terms of biological role, NDH shuttles electrons from NAD(P)H:plastoquinone, via FMN and iron-sulfur (Fe-S) centers, to quinones in the photosynthetic chain and possibly in a chloroplast respiratory chain. The immediate electron acceptor for the enzyme in this species is believed to be plastoquinone. Couples the redox reaction to proton translocation, and thus conserves the redox energy in a proton gradient. This chain is NAD(P)H-quinone oxidoreductase subunit H, chloroplastic, found in Oryza nivara (Indian wild rice).